The primary structure comprises 475 residues: DnaB-like replicative helicase (475 aa).

In terms of domain architecture, SF4 helicase spans 165-444 (YMNKARKVPF…STPTEVNEVA (280 aa)). Residue 197 to 204 (AGVNVGKS) participates in ATP binding. Positions 456-475 (YQRNESTRAQLDALANELKF) are interaction with the helicase assembly factor.

It belongs to the helicase family. DnaB subfamily. Homohexamer. The homohexamer is a trimer of asymmetric dimers. Interacts with the DNA primase; this interaction forms the active primosome complex, which is composed of 6 helicase and 1 primase subunits and expresses full helicase and primase activities. Interacts (via C-terminus) with the helicase assembly factor; this interaction brings about the rapid assembly of the helicase onto ssDNA. Part of the replicase complex that includes the DNA polymerase, the polymerase clamp, the clamp loader complex, the single-stranded DNA binding protein, the primase, the DnaB-like replicative helicase and the helicase assembly factor.

In terms of biological role, ATP-dependent DNA helicase essential for viral DNA replication and recombination. The helicase moves 5' -&gt; 3' on the lagging strand template, unwinding the DNA duplex ahead of the leading strand polymerase at the replication fork and generating ssDNA for both leading and lagging strand synthesis. Interaction with the primase allows the primase to initiate lagging strand synthesis and fully activates the helicase. Loaded by the helicase assembly factor on replication forks that begin at discrete replication origin sequences, as well as on forks that are created during recombination. This is DnaB-like replicative helicase from Escherichia coli (Bacteriophage T4).